A 499-amino-acid polypeptide reads, in one-letter code: Phenylalanine--tRNA ligase alpha subunit (499 aa).

Residues Thr333, 372 to 374 (QIE), and Tyr412 each bind L-phenylalanine. Glu414 is a binding site for Mg(2+). Residue Phe436 coordinates L-phenylalanine.

This sequence belongs to the class-II aminoacyl-tRNA synthetase family. Phe-tRNA synthetase alpha subunit type 2 subfamily. Tetramer of two alpha and two beta subunits. Mg(2+) serves as cofactor.

It is found in the cytoplasm. It catalyses the reaction tRNA(Phe) + L-phenylalanine + ATP = L-phenylalanyl-tRNA(Phe) + AMP + diphosphate + H(+). This chain is Phenylalanine--tRNA ligase alpha subunit, found in Thermoplasma acidophilum (strain ATCC 25905 / DSM 1728 / JCM 9062 / NBRC 15155 / AMRC-C165).